The sequence spans 506 residues: MHRHDCFKTPADEDELDDIDDDMVVGVIAEIEQEVLNESESDDDEYDLADMGAPEPERNDGNISSNESISSDGSFDPNAEDTDSDDSMLDEAATAGASIAKRRKEQNAMDGAEPSGSGPSGSGDYSHLDEDDETDETVRAMIAAIKKPRSAPPEIRLEDFITDICFHPERDIIALATIIGDVHLYEYGNEENKLLRSIEVHAKACRDVEFTEDGRSLITCSKDKCVMVTDMETEKLKKLYETAHDDAINKLHVLDERLFATGDDAGTVKLWDFRTKDAIFELKEVEDQITQMLTNEQNKLLLATSADGYLTTFNIGARKLYVQSEPYEEELNCMGIYRGSSKLVVGTSKGRLYTYNWGYFGYHCDMYPGVKSPISLMIPITDRIACVAGEDGNIRACHIAPYRNLGVVGQHNMPIESLDINSSGELLASSSHNNDVRFWNVKYFEDFGDIKYNEKHNAYKDKRHNLPSSKCTNASDFFADMTKEQDDDDNDDGGNNTTAAGSNNVT.

A compositionally biased stretch (basic and acidic residues) spans 1–11 (MHRHDCFKTPA). Disordered regions lie at residues 1–20 (MHRH…DDID), 33–87 (QEVL…SDDS), and 100–132 (AKRR…DEDD). Positions 33-48 (QEVLNESESDDDEYDL) are enriched in acidic residues. Over residues 61-74 (GNISSNESISSDGS) the composition is skewed to low complexity. Over residues 78–87 (NAEDTDSDDS) the composition is skewed to acidic residues. WD repeat units follow at residues 156–195 (RLED…NKLL), 200–239 (VHAK…LKKL), 243–281 (AHDD…AIFE), 284–323 (EVED…LYVQ), 326–365 (PYEE…YHCD), and 410–449 (QHNM…DFGD). The tract at residues 480-506 (DMTKEQDDDDNDDGGNNTTAAGSNNVT) is disordered. Positions 493 to 506 (GGNNTTAAGSNNVT) are enriched in low complexity.

It belongs to the WD repeat WDR55 family.

This Drosophila mojavensis (Fruit fly) protein is WD repeat-containing protein 55 homolog.